The sequence spans 211 residues: Ribosomal RNA small subunit methyltransferase G (211 aa).

S-adenosyl-L-methionine-binding positions include glycine 76, leucine 81, 127 to 128 (VE), and arginine 142.

This sequence belongs to the methyltransferase superfamily. RNA methyltransferase RsmG family.

The protein resides in the cytoplasm. The enzyme catalyses guanosine(527) in 16S rRNA + S-adenosyl-L-methionine = N(7)-methylguanosine(527) in 16S rRNA + S-adenosyl-L-homocysteine. In terms of biological role, specifically methylates the N7 position of guanine in position 527 of 16S rRNA. In Vibrio campbellii (strain ATCC BAA-1116), this protein is Ribosomal RNA small subunit methyltransferase G.